Consider the following 201-residue polypeptide: MANHFSQLAKKSRTNGNAEKIAKEQSGKPFLDIYKLGDDVLRQNSKRITKVDESIRKLAREMLQSMYAAKGIGLAAPQIGINKELLVIDVNFEDSAAEPLILINPEITDFGTTLNSYEEGCLSIPGVYLNVVRPSTIKLKFRDEMGRPRKMKADGLLARCIQHEMDHLNGILFVDRVTSKDDLNKELLKEGFNEKDVISIN.

The interval 1–21 (MANHFSQLAKKSRTNGNAEKI) is disordered. Fe cation contacts are provided by Cys121 and His163. The active site involves Glu164. Residue His167 participates in Fe cation binding.

The protein belongs to the polypeptide deformylase family. Fe(2+) serves as cofactor.

The enzyme catalyses N-terminal N-formyl-L-methionyl-[peptide] + H2O = N-terminal L-methionyl-[peptide] + formate. Removes the formyl group from the N-terminal Met of newly synthesized proteins. Requires at least a dipeptide for an efficient rate of reaction. N-terminal L-methionine is a prerequisite for activity but the enzyme has broad specificity at other positions. The chain is Peptide deformylase from Prochlorococcus marinus (strain AS9601).